We begin with the raw amino-acid sequence, 432 residues long: Adenylosuccinate synthetase (432 aa).

GTP is bound by residues 11 to 17 and 39 to 41; these read GDEGKGK and GHT. Catalysis depends on aspartate 12, which acts as the Proton acceptor. Mg(2+) is bound by residues aspartate 12 and glycine 39. Residues 12-15, 37-40, threonine 134, arginine 148, asparagine 230, threonine 245, and arginine 309 contribute to the IMP site; these read DEGK and NAGH. Histidine 40 functions as the Proton donor in the catalytic mechanism. 305 to 311 contributes to the substrate binding site; the sequence is VTTGRKR. Residues arginine 311, 337–339, and 419–421 contribute to the GTP site; these read KLD and GTG.

Belongs to the adenylosuccinate synthetase family. In terms of assembly, homodimer. Requires Mg(2+) as cofactor.

The protein localises to the cytoplasm. The catalysed reaction is IMP + L-aspartate + GTP = N(6)-(1,2-dicarboxyethyl)-AMP + GDP + phosphate + 2 H(+). It functions in the pathway purine metabolism; AMP biosynthesis via de novo pathway; AMP from IMP: step 1/2. Plays an important role in the de novo pathway and in the salvage pathway of purine nucleotide biosynthesis. Catalyzes the first committed step in the biosynthesis of AMP from IMP. This is Adenylosuccinate synthetase from Kluyveromyces lactis (strain ATCC 8585 / CBS 2359 / DSM 70799 / NBRC 1267 / NRRL Y-1140 / WM37) (Yeast).